Here is a 132-residue protein sequence, read N- to C-terminus: Small ribosomal subunit protein uS8 (132 aa).

Belongs to the universal ribosomal protein uS8 family. In terms of assembly, part of the 30S ribosomal subunit. Contacts proteins S5 and S12.

In terms of biological role, one of the primary rRNA binding proteins, it binds directly to 16S rRNA central domain where it helps coordinate assembly of the platform of the 30S subunit. The chain is Small ribosomal subunit protein uS8 from Clavibacter michiganensis subsp. michiganensis (strain NCPPB 382).